The primary structure comprises 331 residues: Glycine betaine/proline betaine-binding periplasmic protein (331 aa).

Positions 1 to 21 (MRHTVIFASAFATLVTASAFA) are cleaved as a signal peptide. Substrate is bound by residues tryptophan 86, histidine 90, and 161–163 (WGC). Cysteines 157 and 163 form a disulfide.

The complex is composed of two ATP-binding proteins (ProV), two transmembrane proteins (ProW) and a solute-binding protein (ProX).

It localises to the periplasm. Part of the ProU ABC transporter complex involved in glycine betaine and proline betaine uptake. Binds glycine betaine and proline betaine with high affinity. This chain is Glycine betaine/proline betaine-binding periplasmic protein (proX), found in Salmonella typhimurium (strain LT2 / SGSC1412 / ATCC 700720).